Here is a 350-residue protein sequence, read N- to C-terminus: 2-oxoglutarate and iron-dependent oxygenase domain-containing protein 2 (350 aa).

One can recognise a Fe2OG dioxygenase domain in the interval 215 to 309 (DSHRAFVVKY…RWNLVVWLRA (95 aa)). Fe cation contacts are provided by His235, Asp237, and His290. 2-oxoglutarate is bound at residue Arg300.

It belongs to the OGFOD2 family. Fe(2+) serves as cofactor. Requires L-ascorbate as cofactor.

The protein is 2-oxoglutarate and iron-dependent oxygenase domain-containing protein 2 (OGFOD2) of Homo sapiens (Human).